Reading from the N-terminus, the 214-residue chain is Probable transaldolase (214 aa).

The active-site Schiff-base intermediate with substrate is the lysine 83.

It belongs to the transaldolase family. Type 3B subfamily.

The protein resides in the cytoplasm. The catalysed reaction is D-sedoheptulose 7-phosphate + D-glyceraldehyde 3-phosphate = D-erythrose 4-phosphate + beta-D-fructose 6-phosphate. It functions in the pathway carbohydrate degradation; pentose phosphate pathway; D-glyceraldehyde 3-phosphate and beta-D-fructose 6-phosphate from D-ribose 5-phosphate and D-xylulose 5-phosphate (non-oxidative stage): step 2/3. In terms of biological role, transaldolase is important for the balance of metabolites in the pentose-phosphate pathway. The protein is Probable transaldolase of Carboxydothermus hydrogenoformans (strain ATCC BAA-161 / DSM 6008 / Z-2901).